Consider the following 249-residue polypeptide: Ribosomal RNA small subunit methyltransferase J (249 aa).

S-adenosyl-L-methionine contacts are provided by residues 97-98, 113-114, and Asp167; these read RD and ER.

It belongs to the methyltransferase superfamily. RsmJ family.

The protein localises to the cytoplasm. The enzyme catalyses guanosine(1516) in 16S rRNA + S-adenosyl-L-methionine = N(2)-methylguanosine(1516) in 16S rRNA + S-adenosyl-L-homocysteine + H(+). Specifically methylates the guanosine in position 1516 of 16S rRNA. The protein is Ribosomal RNA small subunit methyltransferase J of Aeromonas salmonicida (strain A449).